We begin with the raw amino-acid sequence, 23 residues long: Protein YsaE (23 aa).

This Escherichia coli (strain K12) protein is Protein YsaE.